A 176-amino-acid chain; its full sequence is Ribosome rescue factor SmrB (176 aa).

The region spanning 98–173 is the Smr domain; sequence LDLHGLTQKQ…GTAALLVLVE (76 aa).

It belongs to the SmrB family. Associates with collided ribosomes, but not with correctly translating polysomes.

Acts as a ribosome collision sensor. Detects stalled/collided disomes (pairs of ribosomes where the leading ribosome is stalled and a second ribosome has collided with it) and endonucleolytically cleaves mRNA at the 5' boundary of the stalled ribosome. Stalled/collided disomes form a new interface (primarily via the 30S subunits) that binds SmrB. Cleaved mRNA becomes available for tmRNA ligation, leading to ribosomal subunit dissociation and rescue of stalled ribosomes. In Yersinia enterocolitica serotype O:8 / biotype 1B (strain NCTC 13174 / 8081), this protein is Ribosome rescue factor SmrB.